Consider the following 547-residue polypeptide: Pyochelin synthase PchD (547 aa).

This sequence belongs to the ATP-dependent AMP-binding enzyme family.

The catalysed reaction is salicylate + holo-[ACP] + ATP = salicyl-[ACP] + AMP + diphosphate. Its pathway is siderophore biosynthesis. The protein operates within antifungal biosynthesis. Involved in the biosynthesis of the siderophore pyochelin. Specifically adenylates salicylate and loads it onto the holo form of PchE via a thioester linkage to the phosphopanthetheine moiety. Is also involved in the synthesis of the antifungal antibiotic dihydroaeruginoic acid (Dha or hydroxyphenyl-thiazolinyl-carboxylate), a precursor of pyochelin. This chain is Pyochelin synthase PchD, found in Pseudomonas aeruginosa (strain UCBPP-PA14).